We begin with the raw amino-acid sequence, 457 residues long: RuvB-like helicase 1 (457 aa).

73-80 (GGPSTGKT) contributes to the ATP binding site.

It belongs to the RuvB family. In terms of assembly, may form heterododecamers with RVB2. Component of the SWR1 chromatin remodeling complex, the INO80 chromatin remodeling complex, and of the R2TP complex.

Its subcellular location is the nucleus. It carries out the reaction ATP + H2O = ADP + phosphate + H(+). In terms of biological role, DNA helicase which participates in several chromatin remodeling complexes, including the SWR1 and the INO80 complexes. The SWR1 complex mediates the ATP-dependent exchange of histone H2A for the H2A variant HZT1 leading to transcriptional regulation of selected genes by chromatin remodeling. The INO80 complex remodels chromatin by shifting nucleosomes and is involved in DNA repair. Also involved in pre-rRNA processing. This Candida glabrata (strain ATCC 2001 / BCRC 20586 / JCM 3761 / NBRC 0622 / NRRL Y-65 / CBS 138) (Yeast) protein is RuvB-like helicase 1 (RVB1).